The primary structure comprises 176 residues: Disulfide bond formation protein B (176 aa).

Topologically, residues 1–13 (MQFLNTFSKSRIS) are cytoplasmic. A helical membrane pass occupies residues 14–30 (WLLLLLCIVFFEGSALF). Residues 31 to 48 (FQHGMKLGPCVMCIYERV) lie on the Periplasmic side of the membrane. An intrachain disulfide couples Cys-40 to Cys-43. Residues 49-64 (AMMGIAFAALLGAIAP) form a helical membrane-spanning segment. Residues 65–71 (QYAIIRW) lie on the Cytoplasmic side of the membrane. Residues 72 to 89 (AGLIAWGYSAVRGLQLSI) form a helical membrane-spanning segment. The Periplasmic portion of the chain corresponds to 90–144 (EHVGYQFNPSPFATCDLFVQFPNWAPLNKWVPWMFEAYGNCAEVVWTFLGQSMPQ). Residues Cys-104 and Cys-130 are joined by a disulfide bond. Residues 145-163 (WLVIIFAGNLVALALIVIA) traverse the membrane as a helical segment. Over 164 to 176 (QFFSKKTNTILDM) the chain is Cytoplasmic.

It belongs to the DsbB family.

It localises to the cell inner membrane. In terms of biological role, required for disulfide bond formation in some periplasmic proteins. Acts by oxidizing the DsbA protein. This is Disulfide bond formation protein B from Photobacterium profundum (strain SS9).